We begin with the raw amino-acid sequence, 342 residues long: D-alanine--D-alanine ligase (342 aa).

Positions Lys-132–Asn-326 constitute an ATP-grasp domain. Glu-159–Tyr-210 provides a ligand contact to ATP. Residues Asp-282, Glu-294, and Asn-296 each coordinate Mg(2+).

This sequence belongs to the D-alanine--D-alanine ligase family. Requires Mg(2+) as cofactor. The cofactor is Mn(2+).

It localises to the cytoplasm. It catalyses the reaction 2 D-alanine + ATP = D-alanyl-D-alanine + ADP + phosphate + H(+). It participates in cell wall biogenesis; peptidoglycan biosynthesis. Functionally, cell wall formation. The protein is D-alanine--D-alanine ligase of Nitratiruptor sp. (strain SB155-2).